The following is a 403-amino-acid chain: CCA-adding enzyme (403 aa).

ATP is bound by residues glycine 32 and arginine 35. The CTP site is built by glycine 32 and arginine 35. Mg(2+) contacts are provided by aspartate 45 and aspartate 47. ATP is bound by residues arginine 116, aspartate 159, arginine 162, arginine 165, and arginine 168. CTP contacts are provided by arginine 116, aspartate 159, arginine 162, arginine 165, and arginine 168.

Belongs to the tRNA nucleotidyltransferase/poly(A) polymerase family. Bacterial CCA-adding enzyme type 3 subfamily. As to quaternary structure, homodimer. Mg(2+) serves as cofactor.

The catalysed reaction is a tRNA precursor + 2 CTP + ATP = a tRNA with a 3' CCA end + 3 diphosphate. The enzyme catalyses a tRNA with a 3' CCA end + 2 CTP + ATP = a tRNA with a 3' CCACCA end + 3 diphosphate. In terms of biological role, catalyzes the addition and repair of the essential 3'-terminal CCA sequence in tRNAs without using a nucleic acid template. Adds these three nucleotides in the order of C, C, and A to the tRNA nucleotide-73, using CTP and ATP as substrates and producing inorganic pyrophosphate. tRNA 3'-terminal CCA addition is required both for tRNA processing and repair. Also involved in tRNA surveillance by mediating tandem CCA addition to generate a CCACCA at the 3' terminus of unstable tRNAs. While stable tRNAs receive only 3'-terminal CCA, unstable tRNAs are marked with CCACCA and rapidly degraded. The sequence is that of CCA-adding enzyme from Limosilactobacillus reuteri (strain DSM 20016) (Lactobacillus reuteri).